A 585-amino-acid chain; its full sequence is uncharacterized protein (585 aa).

Residues 1-18 are compositionally biased toward polar residues; that stretch reads MSALSTKLEPTNSYSESL. The disordered stretch occupies residues 1–23; it reads MSALSTKLEPTNSYSESLPPQRR.

It belongs to the protein kinase superfamily. ADCK protein kinase family.

This is an uncharacterized protein from Synechocystis sp. (strain ATCC 27184 / PCC 6803 / Kazusa).